Consider the following 385-residue polypeptide: UPF0284 protein A9601_04941 (385 aa).

It belongs to the UPF0284 family.

The sequence is that of UPF0284 protein A9601_04941 from Prochlorococcus marinus (strain AS9601).